The primary structure comprises 8525 residues: Nebulin (8525 aa).

The disordered stretch occupies residues Thr34–Lys70. A compositionally biased stretch (low complexity) spans Ser48 to Lys64. Nebulin repeat units follow at residues Thr83 to Gly110, Pro112 to Thr146, Asp156 to Asp181, Lys182 to Ser216, Leu217 to Ala251, Gln252 to Lys286, Glu296 to Asp321, Ile323 to Gly357, Asn362 to Ala396, Glu403 to Leu431, His433 to Gly467, Lys501 to Phe535, Lys536 to Ala570, Lys572 to Gly606, Gly610 to Ala644, His680 to Gly714, Lys748 to Phe782, Lys783 to Ala817, Lys819 to Gly853, Gly857 to Thr891, Ile892 to Lys918, Ser923 to Lys957, Glu968 to Gln986, Lys992 to His1026, Lys1027 to Lys1061, Gly1063 to Gly1097, Gly1101 to Ser1135, Lys1136 to His1166, His1167 to Lys1201, Asp1212 to Gln1230, Lys1236 to His1270, Lys1271 to Ala1305, Gly1307 to Gly1341, Gly1345 to Thr1379, Ser1380 to Gln1407, His1411 to Lys1445, Glu1456 to Gln1474, Lys1480 to His1514, Lys1515 to Ala1549, Gly1551 to Gly1585, Gly1589 to Thr1623, Lys1624 to His1654, His1655 to Lys1689, Glu1697 to Phe1725, Asp1730 to Thr1758, Thr1759 to Lys1793, Gly1795 to Gly1829, Gly1833 to Thr1867, Ser1868 to Arg1894, Thr1899 to Lys1933, Lys1949 to Gln1962, Lys1968 to Thr2002, Lys2003 to Lys2037, Gly2039 to Gly2073, Gly2077 to Thr2111, Ser2112 to Lys2138, Lys2143 to Lys2177, Glu2188 to Gln2206, Gln2212 to Thr2246, Lys2247 to Lys2281, Gly2283 to Gly2317, Gly2321 to Thr2355, Lys2356 to Lys2382, Gln2387 to Gly2421, Lys2436 to Gln2449, Lys2455 to Thr2489, Gln2490 to Arg2524, Gly2526 to Gly2560, Gly2564 to Thr2598, Lys2599 to Lys2625, Gln2630 to Gly2664, Lys2679 to Gln2692, Lys2698 to Thr2732, Thr2733 to Arg2767, Gly2769 to Gly2803, Gly2807 to Thr2841, Lys2842 to Lys2868, Gln2873 to Gly2907, Asp2917 to Gln2935, Lys2941 to Thr2975, Gln2976 to Lys3010, Gly3012 to Gly3046, Gly3050 to Thr3084, Lys3085 to Lys3111, Glu3116 to Gly3150, Ser3158 to Gln3178, Lys3184 to Thr3218, Gln3219 to Lys3253, Gly3255 to Gly3289, Gly3293 to Thr3327, Lys3328 to Lys3354, Glu3359 to Gly3393, Ser3401 to Gln3421, Lys3427 to Thr3461, Gln3462 to Lys3496, Gly3498 to Gly3532, Gly3536 to Thr3570, Arg3571 to Lys3597, Glu3602 to Gly3636, Asp3643 to Gln3664, Lys3670 to Lys3704, Thr3705 to Lys3739, Gly3741 to Gly3775, Gly3779 to Thr3813, Lys3814 to Lys3840, Glu3845 to Gly3879, Glu3889 to Gln3907, Lys3913 to Thr3947, Ser3948 to Met3982, Asp3984 to Gly4018, Gly4022 to Thr4056, Lys4057 to Arg4083, Glu4088 to Gly4122, Glu4132 to Arg4149, Ser4156 to Ser4190, Asn4191 to Gln4225, Gly4227 to Gly4261, Gly4265 to Gly4299, Ile4300 to Arg4326, Gln4331 to Gly4365, Glu4375 to Arg4392, Lys4399 to Ala4433, Asn4434 to Met4468, Gly4470 to Gly4504, Gly4508 to Ala4542, Lys4543 to Arg4569, His4574 to Gly4608, Glu4618 to Arg4635, Ser4642 to Ser4676, Asn4677 to Gln4711, Gly4713 to Gly4747, Gly4751 to Gly4785, Ile4786 to Arg4812, Gln4817 to Gly4851, Glu4861 to Arg4878, Lys4885 to Ala4919, Asn4920 to Met4954, Gly4956 to Gly4990, Gly4994 to Ala5028, Lys5029 to Arg5055, His5060 to Gly5094, Glu5104 to Arg5121, Ser5128 to Ser5162, Asn5163 to Gln5197, Gly5199 to Gly5233, Gly5237 to Gly5271, Ile5272 to Arg5298, Gln5303 to Gly5337, Glu5347 to Arg5364, Lys5371 to Ala5405, Asn5406 to Met5440, Gly5442 to Gly5476, Gly5480 to Ala5514, Lys5515 to Arg5541, Arg5546 to Gly5580, Ser5588 to Arg5607, Lys5614 to Thr5648, Ser5649 to Ala5683, Asp5690 to Gly5718, Gly5722 to Ala5756, Lys5757 to Arg5783, Gln5788 to Gly5822, Asp5829 to Glu5853, Asn5856 to Ser5890, Thr5893 to Ala5924, Gly5926 to Gly5960, Gly5964 to Ala5998, Lys5999 to Arg6025, Gln6030 to Gly6064, Asp6071 to Pro6099, Asn6100 to Gly6134, Lys6135 to Ala6169, Gly6171 to Gly6205, Ala6209 to Ala6243, Asn6244 to His6274, Gln6275 to Gly6309, Asp6316 to Gln6344, Asn6345 to Asp6379, Lys6380 to Ala6414, Ser6416 to Ala6450, Val6458 to Met6488, Lys6489 to Arg6515, His6532 to Gly6554, Asp6561 to Asn6589, Asp6590 to Arg6624, Lys6626 to Thr6660, Gly6661 to Ala6695, Gly6697 to Asp6731, Lys6732 to Gly6766, His6767 to Gly6801, Asp6808 to Asp6836, Lys6837 to Ser6871, Ile6872 to Pro6906, His6907 to Asp6941, Lys6942 to Gly6976, Lys6977 to Gly7011, Ile7012 to Gly7046, Asp7053 to Ser7081, Asp7082 to Ser7110, Pro7125 to Asp7151, Lys7152 to Pro7186, Gly7188 to Ser7222, Asn7223 to Ala7257, His7258 to Gly7292, Val7297 to Gly7327, Thr7328 to Ala7362, Ser7365 to Gly7399, Asn7402 to Glu7433, His7436 to Ser7470, Pro7479 to Gly7505, Asp7514 to Lys7542, Pro7543 to Gly7577, His7578 to Gly7612, Glu7619 to Lys7647, Asn7650 to Arg7684, Gly7687 to Lys7721, Glu7731 to Ala7759, Asn7760 to Ser7794, Tyr7795 to Gly7829, Lys7830 to Ala7864, Lys7867 to Glu7888, Gln7892 to Leu7921, Thr7930 to Pro7957, Thr7961 to Pro7988, Thr7992 to Asn8013, Lys8016 to Leu8045, Thr8054 to Asn8075, Lys8078 to Pro8112, Thr8116 to Pro8143, Thr8147 to Asn8168, Lys8171 to Pro8205, Thr8209 to Arg8232, Lys8233 to Gln8267, Lys8269 to Gly8303, and Cys8304 to Arg8330. The interaction with SVIL stretch occupies residues Ile8313 to Gly8468. 2 disordered regions span residues Gln8385–Tyr8422 and Thr8439–His8463. The segment covering Gly8405–Leu8419 has biased composition (basic and acidic residues). Positions Gln8444–Ser8459 are enriched in low complexity. Residues Thr8466–Ile8525 form the SH3 domain.

Monomer and homooligomer. Interacts with TTN/titin. Interacts with SVIL. Interacts (via nebulin repeats 160-164) with DES. Expressed in skeletal muscle (at protein level). Located in the thin filament of striated muscle.

It is found in the cytoplasm. It localises to the myofibril. The protein resides in the sarcomere. The protein localises to the cytoskeleton. In terms of biological role, this giant muscle protein may be involved in maintaining the structural integrity of sarcomeres and the membrane system associated with the myofibrils. Binds and stabilize F-actin. The polypeptide is Nebulin (NEB) (Homo sapiens (Human)).